Reading from the N-terminus, the 396-residue chain is Potassium channel subfamily K member 9 (396 aa).

Topologically, residues 1–8 (MKRQNVRT) are cytoplasmic. Residues 9–29 (LSLIACTFTYLLVGAAVFDAL) traverse the membrane as a helical segment. Over 30-88 (ESDHEMREEEKLKAEEVRLRGKYNISSDDYQQLELVILQSEPHRAGVQWKFAGSFYFAI) the chain is Extracellular. N-linked (GlcNAc...) asparagine glycosylation is present at Asn-53. Positions 89 to 101 (TVITTIGYGHAAP) form an intramembrane region, pore-forming. The K(+) site is built by Thr-93, Ile-94, Gly-95, and Tyr-96. The interval 93 to 98 (TIGYGH) is selectivity filter 1. Topologically, residues 102–107 (GTDAGK) are extracellular. Residues 108 to 128 (AFCMFYAVLGIPLTLVMFQSL) form a helical membrane-spanning segment. Topologically, residues 129-158 (GERMNTFVRYLLKRIKKCCGMRNTEVSMEN) are cytoplasmic. A helical transmembrane segment spans residues 159–179 (MVTVGFFSCMGTLCLGAAAFS). The Extracellular segment spans residues 180-194 (QCEDWSFFHAYYYCF). Residues 195–207 (ITLTTIGFGDFVA) constitute an intramembrane region (pore-forming). Residues Thr-199, Ile-200, Gly-201, and Phe-202 each contribute to the K(+) site. Residues 199–204 (TIGFGD) are selectivity filter 2. Residues 208-218 (LQSKGALQRKP) are Extracellular-facing. The helical transmembrane segment at 219 to 239 (FYVAFSFMYILVGLTVIGAFL) threads the bilayer. Residues 240-396 (NLVVLRFLTM…HRLHIRRKSI (157 aa)) are Cytoplasmic-facing. The segment at 243–248 (VLRFLT) is X-gate.

This sequence belongs to the two pore domain potassium channel (TC 1.A.1.8) family. Homodimer. Heterodimer with KCNK1. Heterodimer with KCNK3. As to expression, highly expressed in the CNS and at lower levels in the colon, kidney, liver, lung, spleen, stomach and skeletal muscle. The highest expression was found in the olfactory nuclei, piriform cortex, cerebellum, antedorsal thalmic nucleus, pontine nucleus, dorsal raphe and several nuclei in the medulla. Shows a non-homogeneous distribution in the hippocampus. Expressed at highest levels in the lateral posterior and inferior portions and at medium levels in neocortex. Expressed in motoneurons, including hypoglossal motoneurons (at protein level).

Its subcellular location is the cell membrane. It localises to the mitochondrion inner membrane. The protein localises to the cell projection. It is found in the dendrite. It catalyses the reaction K(+)(in) = K(+)(out). It carries out the reaction Na(+)(in) = Na(+)(out). With respect to regulation, activated by halothane and isoflurane. Inhibited by external acidification, diacylglycerol, anandamide and AGT/angiotensin II. Ruthenium red inhibits homomeric but not KCNK3:KCNK9 heteromeric channels. Its function is as follows. K(+) channel that conducts voltage-dependent outward rectifying currents upon membrane depolarization. Voltage sensing is coupled to K(+) electrochemical gradient in an 'ion flux gating' mode where outward but not inward ion flow opens the gate. Changes ion selectivity and becomes permeable to Na(+) ions in response to extracellular acidification. Protonation of the pH sensor His-98 stabilizes C-type inactivation conformation likely converting the channel from outward K(+)-conducting, to inward Na(+)-conducting to nonconductive state. Homo- and heterodimerizes to form functional channels with distinct regulatory and gating properties. Allows K(+) currents with fast-gating kinetics important for the repolarization and hyperpolarization phases of action potentials. In granule neurons, hyperpolarizes the resting membrane potential to limit intrinsic neuronal excitability, but once the action potential threshold is reached, supports high-frequency action potential firing and increased neuronal excitability. Homomeric and/or heteromeric KCNK3:KCNK9 channels operate in cerebellar granule cells, whereas heteromeric KCNK1:KCNK9 enables currents in hippocampal dentate gyrus granule neurons. Dispensable for central chemosensory respiration i.e. breathing controlled by brainstem CO2/pH, it rather conducts pH-sensitive currents and controls the firing rate of serotonergic raphe neurons involved in potentiation of the respiratory chemoreflex. In retinal ganglion cells, mediates outward rectifying currents that regulate action potentials in response to acidification of the synaptic cleft. Involved in transmission of image-forming and nonimage-forming visual information in the retina. In adrenal gland, contributes to the maintenance of a hyperpolarized resting membrane potential of aldosterone-producing cells at zona glomerulosa and limits aldosterone release as part of a regulatory mechanism that controls arterial blood pressure and electrolyte homeostasis. The polypeptide is Potassium channel subfamily K member 9 (Rattus norvegicus (Rat)).